The following is a 213-amino-acid chain: Thiopurine S-methyltransferase (213 aa).

S-adenosyl-L-methionine contacts are provided by Trp10, Leu45, Glu66, and Arg121.

The protein belongs to the class I-like SAM-binding methyltransferase superfamily. TPMT family.

Its subcellular location is the cytoplasm. It catalyses the reaction S-adenosyl-L-methionine + a thiopurine = S-adenosyl-L-homocysteine + a thiopurine S-methylether.. The protein is Thiopurine S-methyltransferase of Aliivibrio fischeri (strain ATCC 700601 / ES114) (Vibrio fischeri).